The following is an 877-amino-acid chain: Leucine--tRNA ligase (877 aa).

The 'HIGH' region signature appears at 43 to 53; it reads PYPSGRIHMGH. Residues 628-632 carry the 'KMSKS' region motif; it reads KMSKS. Lys-631 is an ATP binding site.

It belongs to the class-I aminoacyl-tRNA synthetase family.

The protein localises to the cytoplasm. The catalysed reaction is tRNA(Leu) + L-leucine + ATP = L-leucyl-tRNA(Leu) + AMP + diphosphate. In Brucella melitensis biotype 2 (strain ATCC 23457), this protein is Leucine--tRNA ligase.